Here is a 225-residue protein sequence, read N- to C-terminus: Deoxyribose-phosphate aldolase (225 aa).

Aspartate 96 (proton donor/acceptor) is an active-site residue. Residue lysine 157 is the Schiff-base intermediate with acetaldehyde of the active site. Lysine 185 functions as the Proton donor/acceptor in the catalytic mechanism.

It belongs to the DeoC/FbaB aldolase family. DeoC type 1 subfamily.

The protein resides in the cytoplasm. The enzyme catalyses 2-deoxy-D-ribose 5-phosphate = D-glyceraldehyde 3-phosphate + acetaldehyde. It participates in carbohydrate degradation; 2-deoxy-D-ribose 1-phosphate degradation; D-glyceraldehyde 3-phosphate and acetaldehyde from 2-deoxy-alpha-D-ribose 1-phosphate: step 2/2. In terms of biological role, catalyzes a reversible aldol reaction between acetaldehyde and D-glyceraldehyde 3-phosphate to generate 2-deoxy-D-ribose 5-phosphate. In Microcystis aeruginosa (strain NIES-843 / IAM M-2473), this protein is Deoxyribose-phosphate aldolase.